Here is a 230-residue protein sequence, read N- to C-terminus: MNENVIALDGPAGSGKSTVARQIAERIGFNYLDTGAFYRALTLYLFRLHGNSPNTESFADWVKTSEAERSLSDIRILCEFSAGKENRIFLNGEEVSLAIRTPEITREIKHIAKRRIYRNFVNQELHSLAKLHKLIIDGRDIGTEVFPDAKFKFYLTASSKVRAERRFLQLQEQGIEADRDEIEKEIILRDKSDMEREIAPLYQANDAILIDTDILSKNSVISKILKILDR.

Glycine 10–threonine 18 provides a ligand contact to ATP.

It belongs to the cytidylate kinase family. Type 1 subfamily.

The protein localises to the cytoplasm. The enzyme catalyses CMP + ATP = CDP + ADP. It carries out the reaction dCMP + ATP = dCDP + ADP. This is Cytidylate kinase from Leptospira borgpetersenii serovar Hardjo-bovis (strain L550).